A 324-amino-acid chain; its full sequence is Glyoxylate/hydroxypyruvate reductase B (324 aa).

Active-site residues include arginine 237 and glutamate 266. The Proton donor role is filled by histidine 285.

The protein belongs to the D-isomer specific 2-hydroxyacid dehydrogenase family. GhrB subfamily. Homodimer.

It is found in the cytoplasm. The enzyme catalyses glycolate + NADP(+) = glyoxylate + NADPH + H(+). It catalyses the reaction (R)-glycerate + NAD(+) = 3-hydroxypyruvate + NADH + H(+). The catalysed reaction is (R)-glycerate + NADP(+) = 3-hydroxypyruvate + NADPH + H(+). Functionally, catalyzes the NADPH-dependent reduction of glyoxylate and hydroxypyruvate into glycolate and glycerate, respectively. This chain is Glyoxylate/hydroxypyruvate reductase B, found in Shigella sonnei (strain Ss046).